We begin with the raw amino-acid sequence, 365 residues long: MAQNFGKIPSHKSYVLSLYRTVLRNIPKCCHSYAFQYEIKKTLSIQLFKHKHDKSSWSVYTLLNEFSLLNNCLLEGKLQEIKNLMKPLKKMKKQLKTTKILNSLTSLGDVKTNDPEEVRRFHVLSAYIKRKQDLGLLPAYIPKTYQHKLLLPLALNEHACLKLFHIQQKLKNGPPSAGLSYTKEGRNQIWFVRSPINKGRQQSKKLGILIRKERKDSQKNIDNLNFCEINAAWALHEAIWEEYLESKKIIKVNLPKYLEYAANIPKSTKCNPSSQYQKVKEWVDPVREIMFELHSKSFQRVEYFNKYKEKLLKNGGQLAYFDKKSKEMYAKRLTLFRKMSKETLPYVTLFIEGRDLPSVLAKYGF.

It belongs to the RRG1 family. In terms of processing, N-glycosylated. Glycosylation is important for correct localization of the protein.

The protein resides in the mitochondrion. In terms of biological role, essential for respiratory growth and required for mitochondrial protein synthesis. Required for vacuolar acidification. This chain is Required for respiratory growth protein 1, mitochondrial (RRG1), found in Saccharomyces cerevisiae (strain ATCC 204508 / S288c) (Baker's yeast).